We begin with the raw amino-acid sequence, 209 residues long: Large ribosomal subunit protein uL3 (209 aa).

Residues 132–153 (ATHGNSLSHRVPGSIGQNQTPG) are disordered. The residue at position 150 (Gln150) is an N5-methylglutamine.

This sequence belongs to the universal ribosomal protein uL3 family. In terms of assembly, part of the 50S ribosomal subunit. Forms a cluster with proteins L14 and L19. Methylated by PrmB.

Functionally, one of the primary rRNA binding proteins, it binds directly near the 3'-end of the 23S rRNA, where it nucleates assembly of the 50S subunit. This is Large ribosomal subunit protein uL3 from Enterobacter sp. (strain 638).